We begin with the raw amino-acid sequence, 247 residues long: MNVLSYSINPLKGLYAISGVEVGQHFYWQIGGFQIHGQVLITSWVVIAILLGSAAIAVRSPQTIPTGGQNFFEYVLEFIRDVSKTQIGEEYRPWVPFIGTMFLFIFVSNWSGALLPWKIIQLPHGELAAPTNDINTTVALALLTSVAYFYAGLTKKGLGYFGKYIQPTPILLPINILEDFTKPLSLSFRLFGNILADELVVVVLVSLVPLVVPIPVMFLGLFTSGIQALIFATLAAAYIGESLEGHH.

Transmembrane regions (helical) follow at residues 38–58 (QVLI…AIAV), 95–115 (VPFI…GALL), 134–154 (INTT…AGLT), 199–219 (LVVV…VMFL), and 220–240 (GLFT…AYIG).

Belongs to the ATPase A chain family. F-type ATPases have 2 components, CF(1) - the catalytic core - and CF(0) - the membrane proton channel. CF(1) has five subunits: alpha(3), beta(3), gamma(1), delta(1), epsilon(1). CF(0) has four main subunits: a, b, b' and c.

The protein resides in the plastid. It localises to the chloroplast thylakoid membrane. Its function is as follows. Key component of the proton channel; it plays a direct role in the translocation of protons across the membrane. This is ATP synthase subunit a, chloroplastic (atpI) from Spinacia oleracea (Spinach).